The chain runs to 1017 residues: Pikachurin (1017 aa).

Residues 1 to 24 form the signal peptide; the sequence is MDLIRGVLLRLLLLASSLGPGAVS. 2 Fibronectin type-III domains span residues 37–136 and 144–239; these read PPLD…TLSQ and APQQ…TLCP. N47 is a glycosylation site (N-linked (GlcNAc...) asparagine). The 39-residue stretch at 343-381 folds into the EGF-like 1 domain; sequence FDMPCDETLCSADSFCVNDYTWGGSRCQCTLGKGGESCS. 11 disulfides stabilise this stretch: C347-C358, C352-C369, C371-C380, C534-C564, C569-C580, C574-C590, C592-C601, C788-C799, C793-C808, C810-C819, and C987-C1014. A Laminin G-like 1 domain is found at 386 to 564; that stretch reads IQYPQFFGHS…ALSGADVGEC (179 aa). EGF-like domains lie at 565–602 and 784–820; these read SSGICDEASCIHGGTCTAIKADSYICLCPLGFKGRHCE and AAHPCVRAPCAHGGSCRPRKEGYDCDCPLGFEGLHCQ. Positions 609–788 constitute a Laminin G-like 2 domain; it reads IPQFRESLRS…VNVENAAHPC (180 aa). One can recognise a Laminin G-like 3 domain in the interval 835–1014; that stretch reads IEIPQFIGRS…AVDGKNINTC (180 aa).

In terms of assembly, interacts with DAG1 alpha-dystroglycan. Interacts with GPR158 and GPR179; transsynaptic interaction is required for synaptic organization of photoreceptor cells. O-glycosylated; contains chondroitin sulfate and heparan sulfate.

The protein localises to the secreted. It is found in the extracellular space. The protein resides in the extracellular matrix. Its subcellular location is the synaptic cleft. It localises to the presynaptic active zone. Involved in both the retinal photoreceptor ribbon synapse formation and physiological functions of visual perception. Plays a key role in the synaptic organization of photoreceptors by mediating transsynaptic interaction between alpha-dystroglycan and GPR179 on the postsynaptic membrane. Necessary for proper bipolar dendritic tip apposition to the photoreceptor ribbon synapse. Promotes matrix assembly and cell adhesiveness. This is Pikachurin (EGFLAM) from Homo sapiens (Human).